The following is a 344-amino-acid chain: Phosphate acyltransferase (344 aa).

Belongs to the PlsX family. Homodimer. Probably interacts with PlsY.

The protein localises to the cytoplasm. The enzyme catalyses a fatty acyl-[ACP] + phosphate = an acyl phosphate + holo-[ACP]. It functions in the pathway lipid metabolism; phospholipid metabolism. In terms of biological role, catalyzes the reversible formation of acyl-phosphate (acyl-PO(4)) from acyl-[acyl-carrier-protein] (acyl-ACP). This enzyme utilizes acyl-ACP as fatty acyl donor, but not acyl-CoA. This is Phosphate acyltransferase from Blochmanniella floridana.